Here is a 196-residue protein sequence, read N- to C-terminus: Adenine phosphoribosyltransferase (196 aa).

The protein belongs to the purine/pyrimidine phosphoribosyltransferase family. Homodimer.

It localises to the cytoplasm. The enzyme catalyses AMP + diphosphate = 5-phospho-alpha-D-ribose 1-diphosphate + adenine. The protein operates within purine metabolism; AMP biosynthesis via salvage pathway; AMP from adenine: step 1/1. In terms of biological role, catalyzes a salvage reaction resulting in the formation of AMP, that is energically less costly than de novo synthesis. The polypeptide is Adenine phosphoribosyltransferase (Methylibium petroleiphilum (strain ATCC BAA-1232 / LMG 22953 / PM1)).